The primary structure comprises 835 residues: Ribonucleoside-diphosphate reductase large subunit (835 aa).

The tract at residues 1 to 39 (MPPRAPRPAGAVSPPFPPLAGPPLKARAPRARDSPLTSP) is disordered. Substrate contacts are provided by residues T262, 277–278 (SC), G308, 489–493 (NLCTE), and 666–670 (PTVSS). A disulfide bridge links C278 with C506. N489 serves as the catalytic Proton acceptor. The Cysteine radical intermediate role is filled by C491. E493 acts as the Proton acceptor in catalysis.

This sequence belongs to the ribonucleoside diphosphate reductase large chain family. As to quaternary structure, heterotetramer composed of a homodimer of the large subunit (R1) and a homodimer of the small subunit (R2). Larger multisubunit protein complex are also active, composed of (R1)n(R2)n.

The enzyme catalyses a 2'-deoxyribonucleoside 5'-diphosphate + [thioredoxin]-disulfide + H2O = a ribonucleoside 5'-diphosphate + [thioredoxin]-dithiol. Its function is as follows. Ribonucleoside-diphosphate reductase holoenzyme provides the precursors necessary for viral DNA synthesis. Allows virus growth in non-dividing cells, as well as reactivation from latency in infected hosts. Catalyzes the biosynthesis of deoxyribonucleotides from the corresponding ribonucleotides. The sequence is that of Ribonucleoside-diphosphate reductase large subunit from Suid herpesvirus 1 (strain Kaplan) (SuHV-1).